The sequence spans 460 residues: Bifunctional protein GlmU (460 aa).

Residues 1–235 (MTLTAAIVLA…PLSVEGVNDR (235 aa)) form a pyrophosphorylase region. UDP-N-acetyl-alpha-D-glucosamine-binding positions include 9–12 (LAAG), Lys23, Gln76, and 81–82 (GT). Asp109 is a Mg(2+) binding site. UDP-N-acetyl-alpha-D-glucosamine is bound by residues Gly146, Glu161, Asn176, and Asn233. Asn233 serves as a coordination point for Mg(2+). Positions 236–256 (VQLASLAKAHNLRVCRQWMLD) are linker. An N-acetyltransferase region spans residues 257-460 (GVTIVDPQTT…VDNWKPAWER (204 aa)). UDP-N-acetyl-alpha-D-glucosamine-binding residues include Arg338 and Lys356. His368 functions as the Proton acceptor in the catalytic mechanism. UDP-N-acetyl-alpha-D-glucosamine is bound by residues Tyr371 and Asn382. Residues 391–392 (NY) and Ala428 each bind acetyl-CoA.

This sequence in the N-terminal section; belongs to the N-acetylglucosamine-1-phosphate uridyltransferase family. It in the C-terminal section; belongs to the transferase hexapeptide repeat family. Homotrimer. Mg(2+) is required as a cofactor.

It localises to the cytoplasm. The enzyme catalyses alpha-D-glucosamine 1-phosphate + acetyl-CoA = N-acetyl-alpha-D-glucosamine 1-phosphate + CoA + H(+). It catalyses the reaction N-acetyl-alpha-D-glucosamine 1-phosphate + UTP + H(+) = UDP-N-acetyl-alpha-D-glucosamine + diphosphate. The protein operates within nucleotide-sugar biosynthesis; UDP-N-acetyl-alpha-D-glucosamine biosynthesis; N-acetyl-alpha-D-glucosamine 1-phosphate from alpha-D-glucosamine 6-phosphate (route II): step 2/2. It participates in nucleotide-sugar biosynthesis; UDP-N-acetyl-alpha-D-glucosamine biosynthesis; UDP-N-acetyl-alpha-D-glucosamine from N-acetyl-alpha-D-glucosamine 1-phosphate: step 1/1. It functions in the pathway bacterial outer membrane biogenesis; LPS lipid A biosynthesis. In terms of biological role, catalyzes the last two sequential reactions in the de novo biosynthetic pathway for UDP-N-acetylglucosamine (UDP-GlcNAc). The C-terminal domain catalyzes the transfer of acetyl group from acetyl coenzyme A to glucosamine-1-phosphate (GlcN-1-P) to produce N-acetylglucosamine-1-phosphate (GlcNAc-1-P), which is converted into UDP-GlcNAc by the transfer of uridine 5-monophosphate (from uridine 5-triphosphate), a reaction catalyzed by the N-terminal domain. In Bifidobacterium animalis subsp. lactis (strain AD011), this protein is Bifunctional protein GlmU.